Here is a 100-residue protein sequence, read N- to C-terminus: Tuberoinfundibular peptide of 39 residues (100 aa).

Residues 1–30 (METRQVSRSPRVRLLLLLLLLLVVPWGVRT) form the signal peptide. A propeptide spanning residues 31–59 (ASGVALPPVGVLSLRPPGRAWADPATPRP) is cleaved from the precursor.

Belongs to the parathyroid hormone family. Ligand of high affinity for the PTH2 receptor (PTH2R).

It is found in the secreted. Functionally, plays a role as a potent and selective agonist of PTH2R resulting in adenyl cyclase activation and intracellular calcium levels elevation. Induces protein kinase C beta activation, recruitment of beta-arrestin and PTH2R internalization. May inhibit cell proliferation via its action of PTH2R activation. Neuropeptide which may also have a role in spermatogenesis. May activate nociceptors and nociceptive circuits. This is Tuberoinfundibular peptide of 39 residues (PTH2) from Bos taurus (Bovine).